The primary structure comprises 223 residues: Phosphoribosylformylglycinamidine synthase subunit PurQ (223 aa).

One can recognise a Glutamine amidotransferase type-1 domain in the interval 2 to 223; the sequence is KVAIIRFPGT…LLENFINFNF (222 aa). The Nucleophile role is filled by Cys-84. Catalysis depends on residues His-192 and Glu-194.

In terms of assembly, part of the FGAM synthase complex composed of 1 PurL, 1 PurQ and 2 PurS subunits.

It is found in the cytoplasm. It carries out the reaction N(2)-formyl-N(1)-(5-phospho-beta-D-ribosyl)glycinamide + L-glutamine + ATP + H2O = 2-formamido-N(1)-(5-O-phospho-beta-D-ribosyl)acetamidine + L-glutamate + ADP + phosphate + H(+). It catalyses the reaction L-glutamine + H2O = L-glutamate + NH4(+). The protein operates within purine metabolism; IMP biosynthesis via de novo pathway; 5-amino-1-(5-phospho-D-ribosyl)imidazole from N(2)-formyl-N(1)-(5-phospho-D-ribosyl)glycinamide: step 1/2. Its function is as follows. Part of the phosphoribosylformylglycinamidine synthase complex involved in the purines biosynthetic pathway. Catalyzes the ATP-dependent conversion of formylglycinamide ribonucleotide (FGAR) and glutamine to yield formylglycinamidine ribonucleotide (FGAM) and glutamate. The FGAM synthase complex is composed of three subunits. PurQ produces an ammonia molecule by converting glutamine to glutamate. PurL transfers the ammonia molecule to FGAR to form FGAM in an ATP-dependent manner. PurS interacts with PurQ and PurL and is thought to assist in the transfer of the ammonia molecule from PurQ to PurL. The sequence is that of Phosphoribosylformylglycinamidine synthase subunit PurQ from Campylobacter jejuni subsp. jejuni serotype O:2 (strain ATCC 700819 / NCTC 11168).